Consider the following 334-residue polypeptide: Protein-methionine-sulfoxide reductase catalytic subunit MsrP (334 aa).

A signal peptide (tat-type signal) is located at residues 1-44 (MKKNQFLKESDVTAESVFFMKRRQVLKALGISATALSLPHAAHA). Mo-molybdopterin is bound by residues Asn-88, 91-92 (YE), Cys-146, Thr-181, Asn-233, Arg-238, and 249-251 (GIK).

It belongs to the MsrP family. In terms of assembly, heterodimer of a catalytic subunit (MsrP) and a heme-binding subunit (MsrQ). It depends on Mo-molybdopterin as a cofactor. Exported by the Tat system. Can also be exported by the Sec system.

It localises to the periplasm. The catalysed reaction is L-methionyl-[protein] + a quinone + H2O = L-methionyl-(S)-S-oxide-[protein] + a quinol. It carries out the reaction L-methionyl-[protein] + a quinone + H2O = L-methionyl-(R)-S-oxide-[protein] + a quinol. In terms of biological role, part of the MsrPQ system that repairs oxidized periplasmic proteins containing methionine sulfoxide residues (Met-O), using respiratory chain electrons. Thus protects these proteins from oxidative-stress damage caused by reactive species of oxygen and chlorine. MsrPQ is essential for the maintenance of envelope integrity under bleach stress, rescuing a wide series of structurally unrelated periplasmic proteins from methionine oxidation, including the primary periplasmic chaperone SurA and the lipoprotein Pal. The catalytic subunit MsrP is non-stereospecific, being able to reduce both (R-) and (S-) diastereoisomers of methionine sulfoxide. Can catalyze the reduction of a variety of substrates in vitro, including dimethyl sulfoxide, trimethylamine N-oxide, phenylmethyl sulfoxide and L-methionine sulfoxide. Cannot reduce cyclic N-oxides. Shows no activity as sulfite oxidase. This is Protein-methionine-sulfoxide reductase catalytic subunit MsrP from Escherichia coli (strain K12).